The chain runs to 162 residues: Ribosome maturation factor RimP (162 aa).

It belongs to the RimP family.

It is found in the cytoplasm. Its function is as follows. Required for maturation of 30S ribosomal subunits. This chain is Ribosome maturation factor RimP, found in Cupriavidus taiwanensis (strain DSM 17343 / BCRC 17206 / CCUG 44338 / CIP 107171 / LMG 19424 / R1) (Ralstonia taiwanensis (strain LMG 19424)).